The sequence spans 586 residues: Ezrin (586 aa).

The 294-residue stretch at 2–295 folds into the FERM domain; that stretch reads PKPINVRVTT…GNHELYMRRR (294 aa). Lys-60 is subject to N6-acetyllysine. A [IL]-x-C-x-x-[DE] motif motif is present at residues 115-120; sequence IYCPPE. A Phosphotyrosine; by PDGFR modification is found at Tyr-146. The segment at 244 to 586 is interaction with SCYL3; that stretch reads EIRNISFNDK…KQRIDEFEAM (343 aa). Residues 302 to 462 are a coiled coil; that stretch reads VQQMKAQARE…QDDLVKTKEE (161 aa). The tract at residues 306-338 is disordered; the sequence is KAQAREEKHQKQLERQQLETEKKRRETVEREKE. A compositionally biased stretch (basic and acidic residues) spans 308–338; sequence QAREEKHQKQLERQQLETEKKRRETVEREKE. Ser-366 carries the post-translational modification Phosphoserine. Tyr-478 carries the post-translational modification Phosphotyrosine. The residue at position 535 (Ser-535) is a Phosphoserine. Thr-567 is subject to Phosphothreonine; by ROCK2 and PKC/PRKCI.

In terms of assembly, interacts with PODXL and NHERF2. Found in a complex with EZR, PODXL and NHERF2. Interacts with PALS1. Interacts with MCC, PLEKHG6, SCYL3/PACE1, NHERF1 and TMEM8B. Interacts (when phosphorylated) with FES/FPS. Interacts with dimeric S100P, the interaction may be activating through unmasking of F-actin binding sites. Identified in complexes that contain VIM, EZR, AHNAK, BFSP1, BFSP2, ANK2, PLEC, PRX and spectrin. Detected in a complex composed of at least EZR, AHNAK, PPL and PRX. Interacts with PDPN (via cytoplasmic domain); activates RHOA and promotes epithelial-mesenchymal transition. Interacts with SPN/CD43 cytoplasmic tail, CD44 and ICAM2. Interacts with SLC9A3; interaction targets SLC9A3 to the apical membrane. Interacts with SLC9A1; regulates interactions of SLC9A1 with cytoskeletal and promotes stress fiber formation. Interacts with CLIC5; may work together in a complex which also includes RDX and MYO6 to stabilize linkages between the plasma membrane and subjacent actin cytoskeleton at the base of stereocilia. In terms of processing, phosphorylated by tyrosine-protein kinases. Phosphorylation by ROCK2 suppresses the head-to-tail association of the N-terminal and C-terminal halves resulting in an opened conformation which is capable of actin and membrane-binding. Post-translationally, S-nitrosylation is induced by interferon-gamma and oxidatively-modified low-densitity lipoprotein (LDL(ox)) possibly implicating the iNOS-S100A8/9 transnitrosylase complex. As to expression, glomerular epithelium cell (podocyte). Expressed in cerebrum, cerebellum and hippocampus (at protein level). Expressed in the small intestine, lung, kidney and ovaries.

It localises to the apical cell membrane. The protein localises to the cell projection. Its subcellular location is the microvillus membrane. It is found in the ruffle membrane. The protein resides in the cytoplasm. It localises to the cell cortex. The protein localises to the cytoskeleton. Its subcellular location is the microvillus. A head-to-tail association, of the N-terminal and C-terminal halves results in a closed conformation (inactive form) which is incapable of actin or membrane-binding. Its function is as follows. Probably involved in connections of major cytoskeletal structures to the plasma membrane. In epithelial cells, required for the formation of microvilli and membrane ruffles on the apical pole. Along with PLEKHG6, required for normal macropinocytosis. The sequence is that of Ezrin (Ezr) from Rattus norvegicus (Rat).